The following is a 607-amino-acid chain: UvrABC system protein C (607 aa).

A GIY-YIG domain is found at 15-94 (ENPGVYLMKN…IKRHRPYFNV (80 aa)). A UVR domain is found at 204–239 (DQVLKLLIRLMNEASARLDYETAALRRDQIASIKEV).

Belongs to the UvrC family. As to quaternary structure, interacts with UvrB in an incision complex.

The protein localises to the cytoplasm. In terms of biological role, the UvrABC repair system catalyzes the recognition and processing of DNA lesions. UvrC both incises the 5' and 3' sides of the lesion. The N-terminal half is responsible for the 3' incision and the C-terminal half is responsible for the 5' incision. The polypeptide is UvrABC system protein C (Dehalococcoides mccartyi (strain ATCC BAA-2100 / JCM 16839 / KCTC 5957 / BAV1)).